We begin with the raw amino-acid sequence, 151 residues long: Probable cGMP 3',5'-cyclic phosphodiesterase subunit delta (151 aa).

This sequence belongs to the PDE6D/unc-119 family. As to quaternary structure, interacts with Pde6.

It localises to the nucleus. The protein resides in the cytoplasm. The protein is Probable cGMP 3',5'-cyclic phosphodiesterase subunit delta of Drosophila grimshawi (Hawaiian fruit fly).